We begin with the raw amino-acid sequence, 143 residues long: Small ribosomal subunit protein uS9 (143 aa).

A disordered region spans residues 124–143 (PEPKKFGGKGARARFQKSYR). Over residues 134–143 (ARARFQKSYR) the composition is skewed to basic residues.

The protein belongs to the universal ribosomal protein uS9 family.

This Candida glabrata (strain ATCC 2001 / BCRC 20586 / JCM 3761 / NBRC 0622 / NRRL Y-65 / CBS 138) (Yeast) protein is Small ribosomal subunit protein uS9 (RPS16).